The primary structure comprises 256 residues: Alcohol dehydrogenase (256 aa).

12–35 serves as a coordination point for NAD(+); that stretch reads FVAGLGGIGLDTSKELVKRDLKNL. Serine 140 is a substrate binding site. Tyrosine 153 (proton acceptor) is an active-site residue.

The protein belongs to the short-chain dehydrogenases/reductases (SDR) family. In terms of assembly, homodimer.

It catalyses the reaction a primary alcohol + NAD(+) = an aldehyde + NADH + H(+). The enzyme catalyses a secondary alcohol + NAD(+) = a ketone + NADH + H(+). This Drosophila tsacasi (Fruit fly) protein is Alcohol dehydrogenase (Adh).